The following is a 326-amino-acid chain: MSNDKSAEVVVLPRENDEESKEPVLKNQFDLSTFDIDSPEIDLTHTRADHIPDLTGFPKIEELRMRNNLLVSISPTISSLVTLTSLDLYENQLTEISHLESLVNLVSLDLSYNRIRQINGLDKLTKLETLYLVSNKIEKIENLEALTQLKLLELGDNRIKKIENIGHLVNLDELFIGKNKIRQLEGVETLQKLSVLSLPGNRIVKIENVEQLNNLKELYLSDQGLQDIHGVEPLTNLLLLDVANNEIKTFSGVERLESLNDFWANDNKVESFSEIEQLSKLKGLQTVYLERNPFYFNDTNQYRRKVMMTLTQVTQIDATTCRKPIE.

The disordered stretch occupies residues 1–22 (MSNDKSAEVVVLPRENDEESKE). 12 LRR repeats span residues 35 to 57 (DIDSPEIDLTHTRADHIPDLTGF), 58 to 80 (PKIEELRMRNNLLVSISPTISSL), 81 to 102 (VTLTSLDLYENQLTEISHLESL), 103 to 126 (VNLVSLDLSYNRIRQINGLDKLTK), 128 to 146 (ETLYLVSNKIEKIENLEAL), 147 to 170 (TQLKLLELGDNRIKKIENIGHLVN), 172 to 190 (DELFIGKNKIRQLEGVETL), 191 to 212 (QKLSVLSLPGNRIVKIENVEQL), 213 to 236 (NNLKELYLSDQGLQDIHGVEPLTN), 238 to 256 (LLLDVANNEIKTFSGVERL), 257 to 280 (ESLNDFWANDNKVESFSEIEQLSK), and 281 to 304 (LKGLQTVYLERNPFYFNDTNQYRR).

It belongs to the SDS22 family.

It is found in the nucleus. Regulatory subunit of protein phosphatase 1. This is Protein phosphatase 1 regulatory subunit SDS22 homolog (sds-22) from Caenorhabditis elegans.